A 300-amino-acid chain; its full sequence is tRNA dimethylallyltransferase (300 aa).

Position 11–18 (11–18) interacts with ATP; the sequence is GPTAVGKS. 13 to 18 serves as a coordination point for substrate; the sequence is TAVGKS. The tract at residues 35-38 is interaction with substrate tRNA; sequence DSIQ.

It belongs to the IPP transferase family. As to quaternary structure, monomer. It depends on Mg(2+) as a cofactor.

The catalysed reaction is adenosine(37) in tRNA + dimethylallyl diphosphate = N(6)-dimethylallyladenosine(37) in tRNA + diphosphate. Functionally, catalyzes the transfer of a dimethylallyl group onto the adenine at position 37 in tRNAs that read codons beginning with uridine, leading to the formation of N6-(dimethylallyl)adenosine (i(6)A). The chain is tRNA dimethylallyltransferase from Borrelia recurrentis (strain A1).